The sequence spans 408 residues: Tryptophan--tRNA ligase, chloroplastic/mitochondrial (408 aa).

The N-terminal 52 residues, 1–52 (MGHATSLSHFLILSSSRFSRLGSLTRLLSKPTSLSGSFSSISVTGQGFRCCC), are a transit peptide targeting the chloroplast and mitochondrion. An N-acetylserine modification is found at Ser-53. ATP is bound by residues Gln-72 and 78–81 (HLGN). The short motif at 73–81 (PTGSVHLGN) is the 'HIGH' region element. L-tryptophan is bound at residue Asp-197. ATP contacts are provided by residues 209-211 (GED), Val-260, 269-273 (KMSKS), and Lys-272. The short motif at 269–273 (KMSKS) is the 'KMSKS' region element.

The protein belongs to the class-I aminoacyl-tRNA synthetase family.

It localises to the plastid. The protein resides in the chloroplast. The protein localises to the mitochondrion. The catalysed reaction is tRNA(Trp) + L-tryptophan + ATP = L-tryptophyl-tRNA(Trp) + AMP + diphosphate + H(+). In Arabidopsis thaliana (Mouse-ear cress), this protein is Tryptophan--tRNA ligase, chloroplastic/mitochondrial.